The primary structure comprises 514 residues: Bifunctional purine biosynthesis protein PurH (514 aa).

Positions 1–142 (MLALLSVSDK…KNFRHVSVVV (142 aa)) constitute an MGS-like domain.

It belongs to the PurH family.

The enzyme catalyses (6R)-10-formyltetrahydrofolate + 5-amino-1-(5-phospho-beta-D-ribosyl)imidazole-4-carboxamide = 5-formamido-1-(5-phospho-D-ribosyl)imidazole-4-carboxamide + (6S)-5,6,7,8-tetrahydrofolate. It carries out the reaction IMP + H2O = 5-formamido-1-(5-phospho-D-ribosyl)imidazole-4-carboxamide. It participates in purine metabolism; IMP biosynthesis via de novo pathway; 5-formamido-1-(5-phospho-D-ribosyl)imidazole-4-carboxamide from 5-amino-1-(5-phospho-D-ribosyl)imidazole-4-carboxamide (10-formyl THF route): step 1/1. The protein operates within purine metabolism; IMP biosynthesis via de novo pathway; IMP from 5-formamido-1-(5-phospho-D-ribosyl)imidazole-4-carboxamide: step 1/1. This Myxococcus xanthus (strain DK1622) protein is Bifunctional purine biosynthesis protein PurH.